A 229-amino-acid chain; its full sequence is Secreted RxLR effector protein PITG_22926 (229 aa).

An N-terminal signal peptide occupies residues 1–23 (MRCNHTLCVVAITFLVSWSQTLS). Residues 34–45 (PLVRSVSATEER) carry the RxLR-dEER motif.

The protein belongs to the RxLR effector family.

It is found in the secreted. The protein resides in the host nucleus. Its function is as follows. Secreted effector that acts as a RNA silencing suppressor, probably by inhibiting the biogenesis of small RNAs in the host plant, to manipulate host immune responses and promote Phytophthora infection. The chain is Secreted RxLR effector protein PITG_22926 from Phytophthora infestans (strain T30-4) (Potato late blight agent).